Reading from the N-terminus, the 452-residue chain is Phosphoglucosamine mutase (452 aa).

The active-site Phosphoserine intermediate is Ser112. The Mg(2+) site is built by Ser112, Asp251, Asp253, and Asp255. A Phosphoserine modification is found at Ser112.

This sequence belongs to the phosphohexose mutase family. Mg(2+) serves as cofactor. Post-translationally, activated by phosphorylation.

It carries out the reaction alpha-D-glucosamine 1-phosphate = D-glucosamine 6-phosphate. Catalyzes the conversion of glucosamine-6-phosphate to glucosamine-1-phosphate. This chain is Phosphoglucosamine mutase, found in Bordetella bronchiseptica (strain ATCC BAA-588 / NCTC 13252 / RB50) (Alcaligenes bronchisepticus).